Consider the following 549-residue polypeptide: Chaperonin GroEL (549 aa).

ATP contacts are provided by residues 29–32 (TLGP), lysine 50, 86–90 (DGTTT), glycine 413, 479–481 (NAA), and aspartate 496. The segment at 522–549 (VSDKPEKPQQGGQGGGGMGGGDMGGMDF) is disordered. Residues 532–549 (GGQGGGGMGGGDMGGMDF) are compositionally biased toward gly residues.

This sequence belongs to the chaperonin (HSP60) family. As to quaternary structure, forms a cylinder of 14 subunits composed of two heptameric rings stacked back-to-back. Interacts with the co-chaperonin GroES.

Its subcellular location is the cytoplasm. It catalyses the reaction ATP + H2O + a folded polypeptide = ADP + phosphate + an unfolded polypeptide.. Its function is as follows. Together with its co-chaperonin GroES, plays an essential role in assisting protein folding. The GroEL-GroES system forms a nano-cage that allows encapsulation of the non-native substrate proteins and provides a physical environment optimized to promote and accelerate protein folding. The chain is Chaperonin GroEL from Deinococcus deserti (strain DSM 17065 / CIP 109153 / LMG 22923 / VCD115).